A 411-amino-acid chain; its full sequence is F-box/kelch-repeat protein At3g61590 (411 aa).

Residues 37 to 83 (FSMDSLLPDDLLERILSFLPIASIFRAGTVCKRWNEIVSSRRFLCNF) enclose the F-box domain. Kelch repeat units follow at residues 81–135 (CNFS…SSCG), 137–178 (VCFM…MSTS), 196–246 (SIVK…ICNN), 251–299 (MIYS…LMNL), 302–350 (RLVI…EFDE), and 352–401 (FASS…FTGF).

Part of a SCF (ASK-cullin-F-box) protein ligase complex. Interacts with SKP1A/ASK1, SKP1B/ASK2, ASK3, ASK9, ASK11, ASK12, ASK13, ASK14, ASK16 and ASK18.

It participates in protein modification; protein ubiquitination. Its function is as follows. Component of SCF(ASK-cullin-F-box) E3 ubiquitin ligase complexes, which may mediate the ubiquitination and subsequent proteasomal degradation of target proteins. This is F-box/kelch-repeat protein At3g61590 from Arabidopsis thaliana (Mouse-ear cress).